Consider the following 511-residue polypeptide: Probable DNA ligase (511 aa).

Glutamate 208 provides a ligand contact to ATP. The active-site N6-AMP-lysine intermediate is lysine 210. ATP contacts are provided by arginine 215, arginine 230, glutamate 259, phenylalanine 299, arginine 377, and lysine 383.

This sequence belongs to the ATP-dependent DNA ligase family. Requires Mg(2+) as cofactor.

The enzyme catalyses ATP + (deoxyribonucleotide)n-3'-hydroxyl + 5'-phospho-(deoxyribonucleotide)m = (deoxyribonucleotide)n+m + AMP + diphosphate.. Functionally, DNA ligase that seals nicks in double-stranded DNA during DNA replication, DNA recombination and DNA repair. This Streptomyces griseus subsp. griseus (strain JCM 4626 / CBS 651.72 / NBRC 13350 / KCC S-0626 / ISP 5235) protein is Probable DNA ligase.